We begin with the raw amino-acid sequence, 249 residues long: NADH-quinone oxidoreductase subunit C (249 aa).

It belongs to the complex I 30 kDa subunit family. As to quaternary structure, NDH-1 is composed of 14 different subunits. Subunits NuoB, C, D, E, F, and G constitute the peripheral sector of the complex.

It is found in the cell inner membrane. It carries out the reaction a quinone + NADH + 5 H(+)(in) = a quinol + NAD(+) + 4 H(+)(out). In terms of biological role, NDH-1 shuttles electrons from NADH, via FMN and iron-sulfur (Fe-S) centers, to quinones in the respiratory chain. The immediate electron acceptor for the enzyme in this species is believed to be ubiquinone. Couples the redox reaction to proton translocation (for every two electrons transferred, four hydrogen ions are translocated across the cytoplasmic membrane), and thus conserves the redox energy in a proton gradient. In Xylella fastidiosa (strain M12), this protein is NADH-quinone oxidoreductase subunit C.